Here is a 109-residue protein sequence, read N- to C-terminus: Iron-sulfur cluster assembly protein CyaY (109 aa).

It belongs to the frataxin family.

Its function is as follows. Involved in iron-sulfur (Fe-S) cluster assembly. May act as a regulator of Fe-S biogenesis. The chain is Iron-sulfur cluster assembly protein CyaY from Bordetella avium (strain 197N).